A 348-amino-acid polypeptide reads, in one-letter code: MNGTEGPNFYVPFSNKTGVVRSPFEYPQYYLAEPWQFSMLAAYMFLLIVLGFPINFLTLYVTVQHKKLRTPLNYILLNLAVADLFMVFGGFTTTLYTSLHGYFVFGPTGCNLEGFFATLGGEIALWSLVVLAIERYVVVCKPMSNFRFGENHAIMGVGLTWVMALACAAPPLVGWSRYIPEGMQCSCGIDYYTLKPEVNNESFVIYMFVVHFTIPMIVIFFCYGQLVFTVKEAAAQQQESATTQKAEKEVTRMVIIMVIAFLICWVPYASVAFYIFTHQGFNFGPIFMTLPAFFAKAAAIYNPVIYIMMNKQFRTCMITTLCCGKNPLGDDEVSASASKTETSQVAPA.

An N-acetylmethionine modification is found at Met1. Residues 1–36 (MNGTEGPNFYVPFSNKTGVVRSPFEYPQYYLAEPWQ) are Extracellular-facing. 2 N-linked (GlcNAc...) asparagine glycosylation sites follow: Asn2 and Asn15. The chain crosses the membrane as a helical span at residues 37–61 (FSMLAAYMFLLIVLGFPINFLTLYV). The Cytoplasmic portion of the chain corresponds to 62–73 (TVQHKKLRTPLN). A helical membrane pass occupies residues 74 to 96 (YILLNLAVADLFMVFGGFTTTLY). Residues 97-110 (TSLHGYFVFGPTGC) are Extracellular-facing. A disulfide bridge links Cys110 with Cys187. The chain crosses the membrane as a helical span at residues 111–133 (NLEGFFATLGGEIALWSLVVLAI). The 'Ionic lock' involved in activated form stabilization signature appears at 134–136 (ERY). Over 134–152 (ERYVVVCKPMSNFRFGENH) the chain is Cytoplasmic. Residues 153-173 (AIMGVGLTWVMALACAAPPLV) traverse the membrane as a helical segment. Topologically, residues 174 to 202 (GWSRYIPEGMQCSCGIDYYTLKPEVNNES) are extracellular. Zn(2+) is bound at residue Glu201. Residues 203–224 (FVIYMFVVHFTIPMIVIFFCYG) form a helical membrane-spanning segment. Topologically, residues 225–252 (QLVFTVKEAAAQQQESATTQKAEKEVTR) are cytoplasmic. The chain crosses the membrane as a helical span at residues 253 to 274 (MVIIMVIAFLICWVPYASVAFY). Topologically, residues 275–286 (IFTHQGFNFGPI) are extracellular. Residue Gln279 coordinates Zn(2+). Residues 287–308 (FMTLPAFFAKAAAIYNPVIYIM) form a helical membrane-spanning segment. Lys296 is modified (N6-(retinylidene)lysine). The Cytoplasmic segment spans residues 309–348 (MNKQFRTCMITTLCCGKNPLGDDEVSASASKTETSQVAPA). 2 S-palmitoyl cysteine lipidation sites follow: Cys322 and Cys323. Residues 330–348 (DDEVSASASKTETSQVAPA) form an interaction with SAG region. 2 positions are modified to phosphoserine: Ser334 and Ser338. Phosphothreonine occurs at positions 340 and 342. Ser343 bears the Phosphoserine mark.

This sequence belongs to the G-protein coupled receptor 1 family. Opsin subfamily. Homodimer. Interacts (phosphorylated form) with SAG. Interacts with GNAT1. Interacts with GNAT3. SAG and G-proteins compete for a common binding site. Interacts with GRK1. Interacts with PRCD; the interaction promotes PRCD stability. Forms a complex with ASAP1 and ARF4. Forms a complex with ASAP1, RAB11A, Rabin8/RAB3IP, ARF4 and RAB11FIP3; the complex regulates Golgi-to-cilia rhodopsin/RHO transport in photoreceptors. Post-translationally, phosphorylated on some or all of the serine and threonine residues present in the C-terminal region. In terms of processing, contains one covalently linked retinal chromophore. Upon light absorption, the covalently bound 11-cis-retinal is converted to all-trans-retinal. After hydrolysis of the Schiff base and release of the covalently bound all-trans-retinal, active rhodopsin is regenerated by binding of a fresh molecule of 11-cis-retinal.

It localises to the membrane. Its subcellular location is the cell projection. It is found in the cilium. The protein resides in the photoreceptor outer segment. In terms of biological role, photoreceptor required for image-forming vision at low light intensity. Required for photoreceptor cell viability after birth. Light-induced isomerization of 11-cis to all-trans retinal triggers a conformational change that activates signaling via G-proteins. Subsequent receptor phosphorylation mediates displacement of the bound G-protein alpha subunit by the arrestin SAG and terminates signaling. This chain is Rhodopsin (RHO), found in Pagophilus groenlandicus (Harp seal).